Consider the following 480-residue polypeptide: Glutamate--tRNA ligase (480 aa).

The 'HIGH' region motif lies at 9 to 19 (PSPTGNLHIGT). A 'KMSKS' region motif is present at residues 250–254 (KLSKR). Lys-253 lines the ATP pocket.

The protein belongs to the class-I aminoacyl-tRNA synthetase family. Glutamate--tRNA ligase type 1 subfamily. As to quaternary structure, monomer.

It is found in the cytoplasm. It carries out the reaction tRNA(Glu) + L-glutamate + ATP = L-glutamyl-tRNA(Glu) + AMP + diphosphate. Functionally, catalyzes the attachment of glutamate to tRNA(Glu) in a two-step reaction: glutamate is first activated by ATP to form Glu-AMP and then transferred to the acceptor end of tRNA(Glu). In Microcystis aeruginosa (strain NIES-843 / IAM M-2473), this protein is Glutamate--tRNA ligase.